We begin with the raw amino-acid sequence, 699 residues long: Polyribonucleotide nucleotidyltransferase (699 aa).

Mg(2+)-binding residues include Asp485 and Asp491. A KH domain is found at Pro552–Ile611. Residues Gly621–Lys689 form the S1 motif domain.

This sequence belongs to the polyribonucleotide nucleotidyltransferase family. In terms of assembly, component of the RNA degradosome, which is a multiprotein complex involved in RNA processing and mRNA degradation. Requires Mg(2+) as cofactor.

It is found in the cytoplasm. The enzyme catalyses RNA(n+1) + phosphate = RNA(n) + a ribonucleoside 5'-diphosphate. Functionally, involved in mRNA degradation. Catalyzes the phosphorolysis of single-stranded polyribonucleotides processively in the 3'- to 5'-direction. This is Polyribonucleotide nucleotidyltransferase from Shewanella baltica (strain OS223).